Consider the following 246-residue polypeptide: Probable transcriptional regulatory protein TM1040_1893 (246 aa).

Residues 1 to 21 (MAGHSKWANIQHRKGRQDAAR) are disordered.

This sequence belongs to the TACO1 family.

The protein resides in the cytoplasm. The protein is Probable transcriptional regulatory protein TM1040_1893 of Ruegeria sp. (strain TM1040) (Silicibacter sp.).